Reading from the N-terminus, the 390-residue chain is GTPase Obg (390 aa).

Residues 1-159 (MKFVDEATIK…RELRLELLLL (159 aa)) enclose the Obg domain. Positions 160–333 (ADVGMLGLPN…LCDELADFMD (174 aa)) constitute an OBG-type G domain. GTP contacts are provided by residues 166 to 173 (GLPNAGKS), 191 to 195 (FTTLI), 213 to 216 (DIPG), 283 to 286 (NKTD), and 314 to 316 (AAV). Residues Ser-173 and Thr-193 each coordinate Mg(2+).

It belongs to the TRAFAC class OBG-HflX-like GTPase superfamily. OBG GTPase family. In terms of assembly, monomer. Mg(2+) serves as cofactor.

Its subcellular location is the cytoplasm. Functionally, an essential GTPase which binds GTP, GDP and possibly (p)ppGpp with moderate affinity, with high nucleotide exchange rates and a fairly low GTP hydrolysis rate. Plays a role in control of the cell cycle, stress response, ribosome biogenesis and in those bacteria that undergo differentiation, in morphogenesis control. In Aliivibrio fischeri (strain MJ11) (Vibrio fischeri), this protein is GTPase Obg.